The primary structure comprises 371 residues: S-adenosylmethionine:tRNA ribosyltransferase-isomerase (371 aa).

It belongs to the QueA family. In terms of assembly, monomer.

It is found in the cytoplasm. It carries out the reaction 7-aminomethyl-7-carbaguanosine(34) in tRNA + S-adenosyl-L-methionine = epoxyqueuosine(34) in tRNA + adenine + L-methionine + 2 H(+). Its pathway is tRNA modification; tRNA-queuosine biosynthesis. Its function is as follows. Transfers and isomerizes the ribose moiety from AdoMet to the 7-aminomethyl group of 7-deazaguanine (preQ1-tRNA) to give epoxyqueuosine (oQ-tRNA). The polypeptide is S-adenosylmethionine:tRNA ribosyltransferase-isomerase (Prochlorococcus marinus (strain MIT 9313)).